A 100-amino-acid chain; its full sequence is Glutamyl-tRNA(Gln) amidotransferase subunit C (100 aa).

It belongs to the GatC family. As to quaternary structure, heterotrimer of A, B and C subunits.

The enzyme catalyses L-glutamyl-tRNA(Gln) + L-glutamine + ATP + H2O = L-glutaminyl-tRNA(Gln) + L-glutamate + ADP + phosphate + H(+). It catalyses the reaction L-aspartyl-tRNA(Asn) + L-glutamine + ATP + H2O = L-asparaginyl-tRNA(Asn) + L-glutamate + ADP + phosphate + 2 H(+). Allows the formation of correctly charged Asn-tRNA(Asn) or Gln-tRNA(Gln) through the transamidation of misacylated Asp-tRNA(Asn) or Glu-tRNA(Gln) in organisms which lack either or both of asparaginyl-tRNA or glutaminyl-tRNA synthetases. The reaction takes place in the presence of glutamine and ATP through an activated phospho-Asp-tRNA(Asn) or phospho-Glu-tRNA(Gln). This is Glutamyl-tRNA(Gln) amidotransferase subunit C from Streptococcus pyogenes serotype M1.